The following is a 323-amino-acid chain: Iron-sulfur cluster transfer protein NUBPL (323 aa).

65 to 72 is a binding site for ATP; that stretch reads AKGGVGKS.

Belongs to the Mrp/NBP35 ATP-binding proteins family. Requires [4Fe-4S] cluster as cofactor.

The protein localises to the mitochondrion. In terms of biological role, iron-sulfur cluster transfer protein involved in the assembly of the mitochondrial membrane respiratory chain NADH dehydrogenase (Complex I). May deliver one or more Fe-S clusters to complex I subunits. This Dictyostelium discoideum (Social amoeba) protein is Iron-sulfur cluster transfer protein NUBPL (nubpl).